The primary structure comprises 405 residues: Tryptophan synthase beta chain (405 aa).

The residue at position 98 (Lys98) is an N6-(pyridoxal phosphate)lysine.

The protein belongs to the TrpB family. As to quaternary structure, tetramer of two alpha and two beta chains. Pyridoxal 5'-phosphate serves as cofactor.

It catalyses the reaction (1S,2R)-1-C-(indol-3-yl)glycerol 3-phosphate + L-serine = D-glyceraldehyde 3-phosphate + L-tryptophan + H2O. It functions in the pathway amino-acid biosynthesis; L-tryptophan biosynthesis; L-tryptophan from chorismate: step 5/5. The beta subunit is responsible for the synthesis of L-tryptophan from indole and L-serine. In Xanthomonas axonopodis pv. citri (strain 306), this protein is Tryptophan synthase beta chain.